The following is a 363-amino-acid chain: MKVTVLASAILALINGALALPANAPTLDVTLTQVDNTRIKATVKNIGNEEVTFVHLNFFQDAAPVKKVSLFRNATEVEFTGIKRRYLTEGLSDDALTTLAAGATFEDEFDIASTADLTEGGTVTIRTDGVVPMATDRKVSGYIPYQSNELEIEVDAAKAATVPQAIKLLDRRTKVASCSGSRASALSTALRNTVSLANAAASAASSGSSARFQEYFRTTSSSTRNAVAARFRAIANEASSQSSGKTTYYCTDPYGYCDSNTLAFCLPSSNVIANCDLYYSDLPALTRSCHAQDQATTSLHEFTHAPGVYSPGTDDFAYGYRASTALSASQALLNADNYALFANGTPPSFPSPHPLSSAQTNMV.

The first 19 residues, 1–19, serve as a signal peptide directing secretion; the sequence is MKVTVLASAILALINGALA. The propeptide occupies 20–172; that stretch reads LPANAPTLDV…PQAIKLLDRR (153 aa). Intrachain disulfides connect Cys-178–Cys-250 and Cys-257–Cys-275. Position 300 (His-300) interacts with Zn(2+). Glu-301 is an active-site residue. Zn(2+)-binding residues include His-304 and Asp-315.

The protein belongs to the peptidase M35 family. Requires Zn(2+) as cofactor.

The protein localises to the secreted. The enzyme catalyses Preferential cleavage of bonds with hydrophobic residues in P1'. Also 3-Asn-|-Gln-4 and 8-Gly-|-Ser-9 bonds in insulin B chain.. Secreted metalloproteinase that allows assimilation of proteinaceous substrates. Shows high activities on basic nuclear substrates such as histone and protamine. In Neosartorya fischeri (strain ATCC 1020 / DSM 3700 / CBS 544.65 / FGSC A1164 / JCM 1740 / NRRL 181 / WB 181) (Aspergillus fischerianus), this protein is Neutral protease 2 homolog NFIA_102630.